The chain runs to 424 residues: Circumsporozoite protein (424 aa).

The N-terminal stretch at 1–18 (MMRKLAILSVSSFLFVEA) is a signal peptide. The disordered stretch occupies residues 69–339 (SRSLGENDDG…VKNNNNEEPS (271 aa)). Residues 85–106 (NNREGKDEDKRDGNNEDNETLR) show a composition bias toward basic and acidic residues. The interval 104–111 (TLRKPKHK) is required for the binding to heparan sulfate proteoglycans (HSPGs) on the surface of host hepatocytes. The region I; contains the proteolytic cleavage site stretch occupies residues 112-116 (KLKQP). Over residues 120 to 300 (NPDPNANPNV…PNANPNANPN (181 aa)) the composition is skewed to low complexity. 44 consecutive repeat copies span residues 123–126 (PNAN), 127–130 (PNVD), 131–134 (PNAN), 135–138 (PNVD), 139–142 (PNAN), 143–146 (PNVD), 147–150 (PNAN), 151–154 (PNAN), 155–158 (PNAN), 159–162 (PNAN), 163–166 (PNAN), 167–170 (PNAN), 171–174 (PNAN), 175–178 (PNAN), 179–182 (PNAN), 183–186 (PNAN), 187–190 (PNAN), 191–194 (PNAN), 195–198 (PNAN), 199–202 (PNAN), 203–206 (PNAN), 207–210 (PNAN), 211–214 (PNAN), 215–218 (PNAN), 219–222 (PNAN), 223–226 (PNAN), 227–230 (PNAN), 231–234 (PNAN), 235–238 (PNAN), 239–242 (PNAN), 243–246 (PNAN), 247–250 (PNAN), 251–254 (PNAN), 255–258 (PNAN), 259–262 (PNAN), 263–266 (PNAN), 267–270 (PNAN), 271–274 (PNAN), 275–278 (PNAN), 279–282 (PNAN), 283–286 (PNAN), 287–290 (PNAN), 291–294 (PNAN), and 295–298 (PNAN). Residues 123–298 (PNANPNVDPN…ANPNANPNAN (176 aa)) form a 44 X 4 AA tandem repeats of P-N-[AV]-[ND] region. Positions 301 to 316 (KNNQGNGQGHNMPNDP) are enriched in polar residues. A compositionally biased stretch (low complexity) spans 322–336 (ENANANNAVKNNNNE). Residues 349–402 (KIQNSLSTEWSPCSVTCGNGIQVRIKPGSANKPKDELDYENDIEKKICKMEKCS) enclose the TSP type-1 domain. Cystine bridges form between C361–C396 and C365–C401. An O-linked (Fuc) threonine glycan is attached at T364. C401 is lipidated: GPI-anchor amidated cysteine. The propeptide at 402–424 (SSVFNVVNSSIGLIMVLSFLFLN) is removed in mature form.

This sequence belongs to the plasmodium circumsporozoite protein family. During host cell invasion, proteolytically cleaved at the cell membrane in the region I by a papain-like cysteine protease of parasite origin. Cleavage is triggered by the sporozoite contact with highly sulfated heparan sulfate proteoglycans (HSPGs) present on the host hepatocyte cell surface. Cleavage exposes the TSP type-1 (TSR) domain and is required for productive invasion of host hepatocytes but not for adhesion to the host cell membrane. Cleavage is dispensable for sporozoite development in the oocyst, motility and for traversal of host and vector cells. Post-translationally, O-glycosylated; maybe by POFUT2.

It is found in the cell membrane. It localises to the cytoplasm. Essential sporozoite protein. In the mosquito vector, required for sporozoite development in the oocyst, migration through the vector hemolymph and entry into the vector salivary glands. In the vertebrate host, required for sporozoite migration through the host dermis and infection of host hepatocytes. Binds to highly sulfated heparan sulfate proteoglycans (HSPGs) on the surface of host hepatocytes. Functionally, in the vertebrate host, binds to highly sulfated heparan sulfate proteoglycans (HSPGs) on the surface of host hepatocytes and is required for sporozoite invasion of the host hepatocytes. The chain is Circumsporozoite protein from Plasmodium falciparum (isolate t4 / Thailand).